A 301-amino-acid chain; its full sequence is Oxygen-dependent coproporphyrinogen-III oxidase (301 aa).

Residue S94 coordinates substrate. A divalent metal cation-binding residues include H98 and H108. The active-site Proton donor is the H108. Residue N110–R112 coordinates substrate. A divalent metal cation contacts are provided by H147 and H177. Positions Y242–E277 are important for dimerization. G260–R262 lines the substrate pocket.

Belongs to the aerobic coproporphyrinogen-III oxidase family. Homodimer. It depends on a divalent metal cation as a cofactor.

The protein localises to the cytoplasm. It catalyses the reaction coproporphyrinogen III + O2 + 2 H(+) = protoporphyrinogen IX + 2 CO2 + 2 H2O. It functions in the pathway porphyrin-containing compound metabolism; protoporphyrin-IX biosynthesis; protoporphyrinogen-IX from coproporphyrinogen-III (O2 route): step 1/1. In terms of biological role, involved in the heme biosynthesis. Catalyzes the aerobic oxidative decarboxylation of propionate groups of rings A and B of coproporphyrinogen-III to yield the vinyl groups in protoporphyrinogen-IX. This chain is Oxygen-dependent coproporphyrinogen-III oxidase, found in Photobacterium profundum (strain SS9).